A 384-amino-acid polypeptide reads, in one-letter code: Putative glutamate--cysteine ligase 2 (384 aa).

Belongs to the glutamate--cysteine ligase type 2 family. YbdK subfamily.

It carries out the reaction L-cysteine + L-glutamate + ATP = gamma-L-glutamyl-L-cysteine + ADP + phosphate + H(+). Functionally, ATP-dependent carboxylate-amine ligase which exhibits weak glutamate--cysteine ligase activity. The chain is Putative glutamate--cysteine ligase 2 from Dechloromonas aromatica (strain RCB).